Consider the following 168-residue polypeptide: Photosystem I assembly protein Ycf3 (168 aa).

3 TPR repeats span residues 35–68, 72–105, and 120–153; these read AFTY…EIDP, SYIL…NPFL, and GEQA…TPGN.

It belongs to the Ycf3 family.

The protein resides in the plastid. It localises to the chloroplast thylakoid membrane. Essential for the assembly of the photosystem I (PSI) complex. May act as a chaperone-like factor to guide the assembly of the PSI subunits. The sequence is that of Photosystem I assembly protein Ycf3 from Piper cenocladum (Ant piper).